Reading from the N-terminus, the 539-residue chain is Chaperonin GroEL (539 aa).

Residues 29-32 (TIGP), 86-90 (DGTTT), Gly-414, and Asp-493 contribute to the ATP site.

It belongs to the chaperonin (HSP60) family. Forms a cylinder of 14 subunits composed of two heptameric rings stacked back-to-back. Interacts with the co-chaperonin GroES.

The protein localises to the cytoplasm. The enzyme catalyses ATP + H2O + a folded polypeptide = ADP + phosphate + an unfolded polypeptide.. In terms of biological role, together with its co-chaperonin GroES, plays an essential role in assisting protein folding. The GroEL-GroES system forms a nano-cage that allows encapsulation of the non-native substrate proteins and provides a physical environment optimized to promote and accelerate protein folding. This is Chaperonin GroEL from Staphylococcus aureus.